Reading from the N-terminus, the 234-residue chain is C2H2-type zinc-finger transcription factor clz7 (234 aa).

Disordered regions lie at residues 45–99 and 118–154; these read RPEG…SRVD and SAQP…NGTA. Composition is skewed to low complexity over residues 66–77 and 140–154; these read SQSSNTSPTSES and SSGT…NGTA. The segment at 159 to 184 adopts a C2H2-type 1; degenerate zinc-finger fold; sequence NRCWDHGCNGKKFLNHSNLVRHRREN. The segment at 191-223 adopts a C2H2-type 2; degenerate zinc-finger fold; sequence FICPMCGAYFSRSTARNQHLEKKSCNRVRRYSN.

This sequence belongs to the GLI C2H2-type zinc-finger protein family.

Its subcellular location is the nucleus. In terms of biological role, transcription factor that probably regulates the expression of the gene cluster that mediates the biosynthesis of squalestatin S1 (SQS1, also known as zaragozic acid A), a heavily oxidized fungal polyketide that offers potent cholesterol lowering activity by targeting squalene synthase (SS). This chain is C2H2-type zinc-finger transcription factor clz7, found in Cochliobolus lunatus (Filamentous fungus).